Consider the following 553-residue polypeptide: Mucolipin-3 (553 aa).

At 1 to 62 (MADPEVVVSS…FWARGRKPWK (62 aa)) the chain is on the cytoplasmic side. An interaction with phosphoinositides region spans residues 52–62 (KFWARGRKPWK). The chain crosses the membrane as a helical span at residues 63 to 83 (LAIQILKIAMVTIQLVLFGLS). The Extracellular segment spans residues 84–283 (NQMVVAFKEE…VSGSIQKNTH (200 aa)). Positions 104-118 (KGYMDRMDDTYAVYT) are extracellular/lumenal pore loop. N-linked (GlcNAc...) asparagine glycosylation is found at asparagine 138, asparagine 172, and asparagine 205. Residues cysteine 159 and cysteine 185 are joined by a disulfide bond. Cysteine 238 and cysteine 269 are oxidised to a cystine. The helical transmembrane segment at 284–304 (YMMIFDAFVILTCLVSLILCI) threads the bilayer. Over 305–341 (RSVIRGLQLQQEFVNFFLLHYKKEVSVSDQMEFVNGW) the chain is Cytoplasmic. The chain crosses the membrane as a helical span at residues 342-362 (YIMIIISDILTIIGSILKMEI). Over 363 to 371 (QAKSLTSYD) the chain is Extracellular. A helical membrane pass occupies residues 372 to 392 (VCSILLGTSTMLVWLGVIRYL). Topologically, residues 393–414 (GFFAKYNLLILTLQAALPNVIR) are cytoplasmic. Residues 415–435 (FCCCAAMIYLGYCFCGWIVLG) traverse the membrane as a helical segment. Over 436-443 (PYHDKFRS) the chain is Extracellular. An intramembrane region (pore-forming) is located at residues 444–464 (LNMVSECLFSLINGDDMFATF). Residues 456-459 (NGDD) carry the Selectivity filter motif. The Extracellular segment spans residues 465 to 475 (AKMQQKSYLVW). A helical transmembrane segment spans residues 476 to 497 (LFSRIYLYSFISLFIYMILSLF). The Cytoplasmic segment spans residues 498–553 (IALITDTYETIKQYQQDGFPETELRTFISECKDLPNSGKYRLEDDPPVSLFCCCKK).

It belongs to the transient receptor (TC 1.A.4) family. Polycystin subfamily. MCOLN3 sub-subfamily. Homotetramer. Can heterooligomerize with MCOLN1; heteromeric assemblies have different channel properties as compared to the respective homooligomers and may be tissue-specific. May heterooligomerize with TRPV5 to form a functional distinct ion channel. Interacts with GABARAPL2. N-glycosylated.

It localises to the cell membrane. The protein localises to the early endosome membrane. The protein resides in the late endosome membrane. It is found in the lysosome membrane. Its subcellular location is the cytoplasmic vesicle. It localises to the autophagosome membrane. The enzyme catalyses Ca(2+)(in) = Ca(2+)(out). It carries out the reaction K(+)(in) = K(+)(out). It catalyses the reaction Na(+)(in) = Na(+)(out). With respect to regulation, channel activity is activated by PtdIns(3,5)P2 (phosphatidylinositol 3,5-bisphosphate). Inhibited by lumenal H(+) and Na(+). The channel pore shows dynamic behavior and undergoes spontaneous, Ca(2+)-dependent modulation when conducting Ca(2+). Functionally, nonselective cation channel probably playing a role in the regulation of membrane trafficking events. Acts as a Ca(2+)-permeable cation channel with inwardly rectifying activity. Mediates release of Ca(2+) from endosomes to the cytoplasm, contributes to endosomal acidification and is involved in the regulation of membrane trafficking and fusion in the endosomal pathway. Also permeable to Mg(2+), Na(+) and K(+). Does not seem to act as mechanosensory transduction channel in inner ear sensory hair cells. Proposed to play a critical role at the cochlear stereocilia ankle-link region during hair-bundle growth. Involved in the regulation of autophagy. Through association with GABARAPL2 may be involved in autophagosome formation possibly providing Ca(2+) for the fusion process. Through a possible and probably tissue-specific heteromerization with MCOLN1 may be at least in part involved in many lysosome-dependent cellular events. Possible heteromeric ion channel assemblies with TRPV5 show pharmacological similarity with TRPML3. The protein is Mucolipin-3 (MCOLN3) of Homo sapiens (Human).